The following is a 1450-amino-acid chain: Protein TIC 214 (1450 aa).

A run of 6 helical transmembrane segments spans residues 29 to 49 (FGLY…IVVI), 61 to 81 (VMAF…IYYT), 86 to 106 (LFIK…FYWQ), 132 to 152 (FFDS…PIFF), 166 to 186 (LNFF…FFNA), and 213 to 233 (IIPI…HIPF).

It belongs to the TIC214 family. In terms of assembly, part of the Tic complex.

The protein resides in the plastid. It localises to the chloroplast inner membrane. Its function is as follows. Involved in protein precursor import into chloroplasts. May be part of an intermediate translocation complex acting as a protein-conducting channel at the inner envelope. This Chaetosphaeridium globosum (Charophycean green alga) protein is Protein TIC 214.